The following is a 118-amino-acid chain: Large ribosomal subunit protein uL24 (118 aa).

The protein belongs to the universal ribosomal protein uL24 family. In terms of assembly, part of the 50S ribosomal subunit.

In terms of biological role, one of two assembly initiator proteins, it binds directly to the 5'-end of the 23S rRNA, where it nucleates assembly of the 50S subunit. Functionally, one of the proteins that surrounds the polypeptide exit tunnel on the outside of the subunit. The protein is Large ribosomal subunit protein uL24 of Prochlorococcus marinus (strain AS9601).